A 111-amino-acid polypeptide reads, in one-letter code: T cell receptor beta variable 30 (111 aa).

The N-terminal stretch at 1–18 (MLCSLLALLLGTFFGVRS) is a signal peptide. One can recognise an Ig-like domain in the interval 19–111 (QTIHQWPATL…DSGFYLCAWS (93 aa)). C40 and C108 are oxidised to a cystine. N80 carries N-linked (GlcNAc...) asparagine glycosylation.

As to quaternary structure, alpha-beta TR is a heterodimer composed of an alpha and beta chain; disulfide-linked. The alpha-beta TR is associated with the transmembrane signaling CD3 coreceptor proteins to form the TR-CD3 (TcR or TCR). The assembly of alpha-beta TR heterodimers with CD3 occurs in the endoplasmic reticulum where a single alpha-beta TR heterodimer associates with one CD3D-CD3E heterodimer, one CD3G-CD3E heterodimer and one CD247 homodimer forming a stable octameric structure. CD3D-CD3E and CD3G-CD3E heterodimers preferentially associate with TR alpha and TR beta chains, respectively. The association of the CD247 homodimer is the last step of TcR assembly in the endoplasmic reticulum and is required for transport to the cell surface.

Its subcellular location is the cell membrane. V region of the variable domain of T cell receptor (TR) beta chain that participates in the antigen recognition. Alpha-beta T cell receptors are antigen specific receptors which are essential to the immune response and are present on the cell surface of T lymphocytes. Recognize peptide-major histocompatibility (MH) (pMH) complexes that are displayed by antigen presenting cells (APC), a prerequisite for efficient T cell adaptive immunity against pathogens. Binding of alpha-beta TR to pMH complex initiates TR-CD3 clustering on the cell surface and intracellular activation of LCK that phosphorylates the ITAM motifs of CD3G, CD3D, CD3E and CD247 enabling the recruitment of ZAP70. In turn ZAP70 phosphorylates LAT, which recruits numerous signaling molecules to form the LAT signalosome. The LAT signalosome propagates signal branching to three major signaling pathways, the calcium, the mitogen-activated protein kinase (MAPK) kinase and the nuclear factor NF-kappa-B (NF-kB) pathways, leading to the mobilization of transcription factors that are critical for gene expression and essential for T cell growth and differentiation. The T cell repertoire is generated in the thymus, by V-(D)-J rearrangement. This repertoire is then shaped by intrathymic selection events to generate a peripheral T cell pool of self-MH restricted, non-autoaggressive T cells. Post-thymic interaction of alpha-beta TR with the pMH complexes shapes TR structural and functional avidity. This is T cell receptor beta variable 30 from Homo sapiens (Human).